Consider the following 1367-residue polypeptide: Paired amphipathic helix protein Sin3-like 2 (1367 aa).

The segment at 14 to 44 (QFKRPLGSSRGESYEQSPITGGGSIGEGGIN) is disordered. The segment covering 33 to 42 (TGGGSIGEGG) has biased composition (gly residues). PAH domains are found at residues 46 to 116 (QKLT…LPKG) and 130 to 200 (KTVE…LPDS). The segment at 212 to 322 (SQAQRYDDRG…EAYSGPASHS (111 aa)) is disordered. Basic and acidic residues-rich tracts occupy residues 230-286 (MFME…SRDL) and 299-311 (FSEK…RMEG). The PAH 3 domain occupies 327-396 (LKSMYNQAFL…DEFNQFFERC (70 aa)). Disordered stretches follow at residues 417–446 (EENL…KERS), 786–883 (DVHA…LSKP), 912–946 (QSDT…DSED), and 958–1031 (ATAK…EGME). 2 stretches are compositionally biased toward basic and acidic residues: residues 424–446 (VKGE…KERS) and 806–819 (SSGK…DLAN). Polar residues-rich tracts occupy residues 851–876 (ATSS…SSGS) and 912–923 (QSDTSKANSNYD). Basic and acidic residues predominate over residues 958 to 967 (ATAKTEHSVE). Acidic residues-rich tracts occupy residues 968–989 (AEGE…EAGE) and 997–1016 (IGDE…EHDE). Ser-1023 carries the phosphoserine modification.

Its subcellular location is the nucleus. Acts as a transcriptional repressor. Plays roles in regulating gene expression and genome stability. The chain is Paired amphipathic helix protein Sin3-like 2 (SNL2) from Arabidopsis thaliana (Mouse-ear cress).